Consider the following 601-residue polypeptide: Oligoendopeptidase F, plasmid (601 aa).

His387 is a Zn(2+) binding site. Glu388 is a catalytic residue. Zn(2+)-binding residues include His391 and His394.

It belongs to the peptidase M3B family. Zn(2+) is required as a cofactor.

Hydrolyzes peptides containing between 7 and 17 amino acids with a rather wide specificity. The sequence is that of Oligoendopeptidase F, plasmid (pepF1) from Lactococcus lactis subsp. cremoris (Streptococcus cremoris).